A 108-amino-acid chain; its full sequence is Protein S100-A15A (108 aa).

One can recognise an EF-hand domain in the interval K53–D88. Ca(2+)-binding residues include D66, N68, D70, Q72, and E77.

Belongs to the S-100 family.

The sequence is that of Protein S100-A15A (S100A15A) from Gorilla gorilla gorilla (Western lowland gorilla).